The following is a 179-amino-acid chain: Crossover junction endodeoxyribonuclease RuvC (179 aa).

Residues D14, E74, and D147 contribute to the active site. D14, E74, and D147 together coordinate Mg(2+).

The protein belongs to the RuvC family. In terms of assembly, homodimer which binds Holliday junction (HJ) DNA. The HJ becomes 2-fold symmetrical on binding to RuvC with unstacked arms; it has a different conformation from HJ DNA in complex with RuvA. In the full resolvosome a probable DNA-RuvA(4)-RuvB(12)-RuvC(2) complex forms which resolves the HJ. The cofactor is Mg(2+).

It is found in the cytoplasm. The enzyme catalyses Endonucleolytic cleavage at a junction such as a reciprocal single-stranded crossover between two homologous DNA duplexes (Holliday junction).. Its function is as follows. The RuvA-RuvB-RuvC complex processes Holliday junction (HJ) DNA during genetic recombination and DNA repair. Endonuclease that resolves HJ intermediates. Cleaves cruciform DNA by making single-stranded nicks across the HJ at symmetrical positions within the homologous arms, yielding a 5'-phosphate and a 3'-hydroxyl group; requires a central core of homology in the junction. The consensus cleavage sequence is 5'-(A/T)TT(C/G)-3'. Cleavage occurs on the 3'-side of the TT dinucleotide at the point of strand exchange. HJ branch migration catalyzed by RuvA-RuvB allows RuvC to scan DNA until it finds its consensus sequence, where it cleaves and resolves the cruciform DNA. This is Crossover junction endodeoxyribonuclease RuvC from Rubrobacter xylanophilus (strain DSM 9941 / JCM 11954 / NBRC 16129 / PRD-1).